The following is a 230-amino-acid chain: UPF0502 protein Patl_1161 (230 aa).

It belongs to the UPF0502 family.

The chain is UPF0502 protein Patl_1161 from Pseudoalteromonas atlantica (strain T6c / ATCC BAA-1087).